A 1012-amino-acid polypeptide reads, in one-letter code: MRRSTDPRNLLVRRGPLLVDGESAISELDPGFFPTGDAPKMSSTTRRRFNLIAFTPGPVTVISSLVYLALLIPLLLVHTIVPSAPKSNPKGVDLSEAWNDLQHLTSGFHPYNSHRNDEIHQWLLQRVGHILDASRKAHEDDAMGSVAPDVFVFDDQQSNLTFSGGGVGNKPITGVYFEGKNIIVYIRGLEDDKENWWDSPGGKPKGKGGVLVNAHYDSVSTGFGATDDGVGVVSVLQLIKFFTSPGNLPRKGLVLLLNNGEEDYLNGARAYSQHPLSKYTHTFLNLEGAGAGGRAALFRTTDIEVTRFYKSSPHPFGSVLAADGFKMGLIRSETDYAVFKGVLGLRGLDVAFIEPRARYHTDQDDVRHTSIDSVWHMLSAAIATTKGLVSYTGSEFDGRAPGKGMVNSGVGTHGVWFDLFGSSFAVFRLHTLFAISVTLLVVCPIVLFVIGIILSKMDKMYLFSIHETIPETKEKVSVRGLRGLFRYPIILVVSSGILIGLSYLLAKVNPFIVHSSSYAVWSMMLSSWIFMTWFLSCIADFFRPSALHRAYTFTWQLLVMWVLLVISTVYVNQHDIAAGYFIVFYFAGTFLATLISYLELFALPNKTRYAREQSQYPSRLGSNRSSRILSPSADELPTGGDNNGEIYDGEEEPTESSSLLGRQRRTTFANYTRTGRDLASSESGTYEDHSETGVFGEEQKWSASLPTWTWVLQFLFVGPVVIMFIGQLGLFLTSAMNQVGADGVGLLVVYIAIAVFSVLLLIPLSPFIHRFTYHVPTFLLLVFIATLIYNLAAFPFSAENRLKIFFVQELNLDTGRNQVSLTGVDPYVQDIIRAIPSASKENISCDSELDSGRRKCSWPGLAPEVVQDEPTDRWLSFNISKPSSQETKDTPVLHARLHVSGKNTRACRVNFERPIRDYSLPGSALDDRMPHTLPQGISEIRLWSRTWENVWTVDVQWDAEDMDELHGRVVCLWSDANQLGSIPALDELRLFAPPWVAISKLKDGLVEVSRGF.

Topologically, residues 1–60 (MRRSTDPRNLLVRRGPLLVDGESAISELDPGFFPTGDAPKMSSTTRRRFNLIAFTPGPVT) are cytoplasmic. The helical transmembrane segment at 61-81 (VISSLVYLALLIPLLLVHTIV) threads the bilayer. The Vacuolar portion of the chain corresponds to 82–432 (PSAPKSNPKG…SFAVFRLHTL (351 aa)). N159 carries an N-linked (GlcNAc...) asparagine glycan. Residues H215 and D227 each coordinate Zn(2+). The active-site Proton acceptor is E261. 3 residues coordinate Zn(2+): E262, E287, and H360. A helical transmembrane segment spans residues 433 to 453 (FAISVTLLVVCPIVLFVIGII). Topologically, residues 454–487 (LSKMDKMYLFSIHETIPETKEKVSVRGLRGLFRY) are cytoplasmic. The chain crosses the membrane as a helical span at residues 488–508 (PIILVVSSGILIGLSYLLAKV). The Vacuolar segment spans residues 509–518 (NPFIVHSSSY). A helical transmembrane segment spans residues 519 to 539 (AVWSMMLSSWIFMTWFLSCIA). Residues 540-550 (DFFRPSALHRA) are Cytoplasmic-facing. A helical membrane pass occupies residues 551 to 571 (YTFTWQLLVMWVLLVISTVYV). Residues 572–575 (NQHD) lie on the Vacuolar side of the membrane. A helical membrane pass occupies residues 576-596 (IAAGYFIVFYFAGTFLATLIS). Topologically, residues 597–710 (YLELFALPNK…WSASLPTWTW (114 aa)) are cytoplasmic. The segment covering 614–629 (SQYPSRLGSNRSSRIL) has biased composition (polar residues). Residues 614 to 660 (SQYPSRLGSNRSSRILSPSADELPTGGDNNGEIYDGEEEPTESSSLL) form a disordered region. The chain crosses the membrane as a helical span at residues 711 to 731 (VLQFLFVGPVVIMFIGQLGLF). The Vacuolar segment spans residues 732 to 743 (LTSAMNQVGADG). Residues 744-764 (VGLLVVYIAIAVFSVLLLIPL) form a helical membrane-spanning segment. Residues 765 to 777 (SPFIHRFTYHVPT) lie on the Cytoplasmic side of the membrane. A helical membrane pass occupies residues 778–798 (FLLLVFIATLIYNLAAFPFSA). The Vacuolar segment spans residues 799-1012 (ENRLKIFFVQ…DGLVEVSRGF (214 aa)). N842 and N878 each carry an N-linked (GlcNAc...) asparagine glycan.

It belongs to the peptidase M28 family. Zn(2+) serves as cofactor.

The protein resides in the vacuole membrane. In terms of biological role, may be involved in vacuolar sorting and osmoregulation. The chain is Vacuolar membrane protease from Coccidioides posadasii (strain C735) (Valley fever fungus).